The chain runs to 131 residues: Agouti-signaling protein (131 aa).

The N-terminal stretch at 1–22 is a signal peptide; sequence MDVTRLLLATLVGFLCFFTVHS. N-linked (GlcNAc...) asparagine glycosylation is present at N39. The tract at residues 58 to 100 is disordered; sequence KSKKISRKEAEKRKRSSKKKASMKKVARPPPPSPCVATRDSCK. Positions 70-84 are enriched in basic residues; the sequence is RKRSSKKKASMKKVA. Cystine bridges form between C92/C107, C99/C113, C106/C124, C110/C131, and C115/C122. Residues 92–131 enclose the Agouti domain; that stretch reads CVATRDSCKPPAPACCDPCASCQCRFFGSACTCRVLNPNC.

Epithelial cells of the hair follicles and the epidermis.

The protein resides in the secreted. Its function is as follows. Involved in the regulation of melanogenesis. The binding of ASP to MC1R precludes alpha-MSH initiated signaling and thus blocks production of cAMP, leading to a down-regulation of eumelanogenesis (brown/black pigment) and thus increasing synthesis of pheomelanin (yellow/red pigment). Causes hair follicle melanocytes to synthesize phaeomelanin instead of black or brown pigment eumelanin and produces hairs with a subapical yellow band on an otherwise black or brown background when expressed during the mid-portion of hair growth. This is Agouti-signaling protein (Asip) from Mus musculus (Mouse).